The following is a 702-amino-acid chain: Elongation factor G 1 (702 aa).

The tr-type G domain occupies Glu-8–Val-290. Residues Ala-17 to Thr-24, Asp-88 to His-92, and Asn-142 to Asp-145 each bind GTP.

Belongs to the TRAFAC class translation factor GTPase superfamily. Classic translation factor GTPase family. EF-G/EF-2 subfamily.

Its subcellular location is the cytoplasm. Functionally, catalyzes the GTP-dependent ribosomal translocation step during translation elongation. During this step, the ribosome changes from the pre-translocational (PRE) to the post-translocational (POST) state as the newly formed A-site-bound peptidyl-tRNA and P-site-bound deacylated tRNA move to the P and E sites, respectively. Catalyzes the coordinated movement of the two tRNA molecules, the mRNA and conformational changes in the ribosome. This chain is Elongation factor G 1, found in Cupriavidus pinatubonensis (strain JMP 134 / LMG 1197) (Cupriavidus necator (strain JMP 134)).